The primary structure comprises 417 residues: NADH-dependent phenylglyoxylate dehydrogenase subunit alpha (417 aa).

In terms of assembly, dimer of heteropentamers composed of an alpha (PadG), a beta (PadI), a gamma (PadE), a delta (PadF) and an epsilon (PadH) subunit.

The enzyme catalyses phenylglyoxylate + NAD(+) + CoA = benzoyl-CoA + CO2 + NADH. With respect to regulation, activated by magnesium ions and thiamine diphosphate. Its function is as follows. Involved in the anaerobic metabolism of phenylalanine and phenylacetate. Catalyzes the oxidative decarboxylation of phenylglyoxylate to benzoyl-CoA and CO(2). It can also react slowly with 2-oxo-3-methylbutanoate and use different electron acceptors such as benzyl viologen, methyl viologen, FAD or FMN, but NAD seems to be the physiological electron acceptor. Also catalyzes an isotope exchange between CO(2) and the carboxyl group which proves partial or complete reversibility of the oxidative decarboxylation reaction. The chain is NADH-dependent phenylglyoxylate dehydrogenase subunit alpha (padG) from Aromatoleum evansii (Azoarcus evansii).